A 115-amino-acid polypeptide reads, in one-letter code: uncharacterized protein (115 aa).

2 consecutive transmembrane segments (helical) span residues 11–31 and 85–105; these read FLYL…LVWN and GYII…YALI.

It to M.thermoautotrophicum MTH1706.

Its subcellular location is the cell membrane. This is an uncharacterized protein from Methanocaldococcus jannaschii (strain ATCC 43067 / DSM 2661 / JAL-1 / JCM 10045 / NBRC 100440) (Methanococcus jannaschii).